The chain runs to 147 residues: UPF0208 membrane protein CGSHiEE_06015 (147 aa).

The next 2 helical transmembrane spans lie at 38–58 (FAQKFMPFVAVFAILWQQIYA) and 67–87 (IAILTALFALLIPFQGLYWLG).

It belongs to the UPF0208 family.

Its subcellular location is the cell inner membrane. The chain is UPF0208 membrane protein CGSHiEE_06015 from Haemophilus influenzae (strain PittEE).